The chain runs to 194 residues: CASP-like protein Ni6 (194 aa).

Residues 1–27 are Cytoplasmic-facing; it reads MSSMETEKGAVPTPQAPPVAPTDNKYR. A helical membrane pass occupies residues 28–48; the sequence is VVDVILRVLLLAASIASVVLM. Residues 49 to 75 lie on the Extracellular side of the membrane; that stretch reads VTSKQTEIIVSPFGSRPNAAKFQNSPA. A helical membrane pass occupies residues 76–96; the sequence is FIYLVAALSVAGLYSIITALV. Topologically, residues 97–109 are cytoplasmic; it reads SLSYMRKPIVPPK. Residues 110–130 form a helical membrane-spanning segment; sequence LFWILLIHDVLLLGIVAAATG. Residues 131 to 161 lie on the Extracellular side of the membrane; it reads TAGGVGYIGLKGNTHVRWGKIRNVYDKFCRH. A helical membrane pass occupies residues 162–182; that stretch reads VGASIIVSLFAAAVLVLLVFV. Over 183–194 the chain is Cytoplasmic; it reads NANSLYRRIPKY.

This sequence belongs to the Casparian strip membrane proteins (CASP) family. Homodimer and heterodimers.

The protein localises to the cell membrane. The chain is CASP-like protein Ni6 (Ni6) from Beta vulgaris subsp. maritima (Sea beet).